The primary structure comprises 304 residues: Type II restriction enzyme LlaDCHI (304 aa).

It belongs to the DpnII type II restriction endonuclease family.

It catalyses the reaction Endonucleolytic cleavage of DNA to give specific double-stranded fragments with terminal 5'-phosphates.. Functionally, a P subtype restriction enzyme that recognizes the double-stranded unmethylated sequence 5'-GATC-3' and cleaves before G-1. This Lactococcus lactis subsp. cremoris (Streptococcus cremoris) protein is Type II restriction enzyme LlaDCHI (llaDCHIR).